The chain runs to 346 residues: Ribosomal RNA small subunit methyltransferase H (346 aa).

S-adenosyl-L-methionine contacts are provided by residues 47–49 (GGY), Asp-65, Phe-92, Asp-113, and Gln-120. The tract at residues 294–346 (AVEPGSDEVAGNPRARSAKLRAAERTDAPAHPDGDLAGLLPADLSQRRGRRRS) is disordered. The segment covering 314-327 (RAAERTDAPAHPDG) has biased composition (basic and acidic residues). Low complexity predominate over residues 328-337 (DLAGLLPADL).

This sequence belongs to the methyltransferase superfamily. RsmH family.

The protein resides in the cytoplasm. It catalyses the reaction cytidine(1402) in 16S rRNA + S-adenosyl-L-methionine = N(4)-methylcytidine(1402) in 16S rRNA + S-adenosyl-L-homocysteine + H(+). Its function is as follows. Specifically methylates the N4 position of cytidine in position 1402 (C1402) of 16S rRNA. This Azorhizobium caulinodans (strain ATCC 43989 / DSM 5975 / JCM 20966 / LMG 6465 / NBRC 14845 / NCIMB 13405 / ORS 571) protein is Ribosomal RNA small subunit methyltransferase H.